A 283-amino-acid chain; its full sequence is Ribosomal RNA small subunit methyltransferase H (283 aa).

Residues 31-33, D50, F77, D93, and Q100 each bind S-adenosyl-L-methionine; that span reads GGH.

This sequence belongs to the methyltransferase superfamily. RsmH family.

The protein localises to the cytoplasm. It carries out the reaction cytidine(1402) in 16S rRNA + S-adenosyl-L-methionine = N(4)-methylcytidine(1402) in 16S rRNA + S-adenosyl-L-homocysteine + H(+). Functionally, specifically methylates the N4 position of cytidine in position 1402 (C1402) of 16S rRNA. The chain is Ribosomal RNA small subunit methyltransferase H from Trichodesmium erythraeum (strain IMS101).